The sequence spans 265 residues: Neuronal membrane glycoprotein M6-b (265 aa).

A helical transmembrane segment spans residues 31–51 (GGVPYASLVATILCFSGVALF). Residue asparagine 73 is glycosylated (N-linked (GlcNAc...) asparagine). 2 helical membrane passes run 90–110 (VIYG…AEGF) and 136–156 (FVFL…FSAV). Asparagine 177 carries an N-linked (GlcNAc...) asparagine glycan. Residues 224 to 244 (LFIVACAGAGATVIALLIYMM) traverse the membrane as a helical segment. A Phosphoserine modification is found at serine 257.

It belongs to the myelin proteolipid protein family. In terms of assembly, interacts with SERT. In terms of tissue distribution, neurons and glia; cerebellar Bergmann glia, in glia within white matter tracts of the cerebellum and cerebrum, and in embryonic dorsal root ganglia.

It localises to the cell membrane. In terms of biological role, may be involved in neural development. Involved in regulation of osteoblast function and bone formation. Involved in matrix vesicle release by osteoblasts; this function seems to involve maintenance of the actin cytoskeleton. May be involved in cellular trafficking of SERT and thereby in regulation of serotonin uptake. This chain is Neuronal membrane glycoprotein M6-b (GPM6B), found in Homo sapiens (Human).